Consider the following 267-residue polypeptide: 4-hydroxy-tetrahydrodipicolinate reductase (267 aa).

Residue 10–15 coordinates NAD(+); it reads GAGGKM. Residue arginine 38 coordinates NADP(+). NAD(+) contacts are provided by residues 100–102 and 126–129; these read GTT and APNF. Histidine 156 (proton donor/acceptor) is an active-site residue. Histidine 157 is a (S)-2,3,4,5-tetrahydrodipicolinate binding site. Lysine 160 serves as the catalytic Proton donor. Residue 166 to 167 participates in (S)-2,3,4,5-tetrahydrodipicolinate binding; it reads GT.

It belongs to the DapB family.

It is found in the cytoplasm. It catalyses the reaction (S)-2,3,4,5-tetrahydrodipicolinate + NAD(+) + H2O = (2S,4S)-4-hydroxy-2,3,4,5-tetrahydrodipicolinate + NADH + H(+). The enzyme catalyses (S)-2,3,4,5-tetrahydrodipicolinate + NADP(+) + H2O = (2S,4S)-4-hydroxy-2,3,4,5-tetrahydrodipicolinate + NADPH + H(+). It functions in the pathway amino-acid biosynthesis; L-lysine biosynthesis via DAP pathway; (S)-tetrahydrodipicolinate from L-aspartate: step 4/4. Catalyzes the conversion of 4-hydroxy-tetrahydrodipicolinate (HTPA) to tetrahydrodipicolinate. The chain is 4-hydroxy-tetrahydrodipicolinate reductase from Desulfitobacterium hafniense (strain DSM 10664 / DCB-2).